Reading from the N-terminus, the 72-residue chain is Large ribosomal subunit protein bL28 (72 aa).

Belongs to the bacterial ribosomal protein bL28 family.

The sequence is that of Large ribosomal subunit protein bL28 from Chlorobium limicola (strain DSM 245 / NBRC 103803 / 6330).